Here is a 150-residue protein sequence, read N- to C-terminus: Putative STAG3-like protein 4 (150 aa).

Belongs to the SCC3 family.

The protein is Putative STAG3-like protein 4 (STAG3L4) of Homo sapiens (Human).